Here is a 376-residue protein sequence, read N- to C-terminus: Pulmonary surfactant-associated protein B (376 aa).

The first 24 residues, 1–24 (MAKLHLQWLLLLPTLCSLGAATES), serve as a signal peptide directing secretion. The 39-residue stretch at 25–63 (ASSPDCAQGPKFWCQSLEQAIQCRALGHCLQEVWGHAGA) folds into the Saposin A-type domain. Positions 25-190 (ASSPDCAQGP…PHTQDLSEQQ (166 aa)) are excised as a propeptide. 3 Saposin B-type domains span residues 63–145 (ANDL…PLGQ), 194–271 (PLPF…STAD), and 290–365 (QDTE…EAPA). Cystine bridges form between Cys67/Cys141, Cys70/Cys135, Cys98/Cys110, Cys198/Cys267, Cys201/Cys261, Cys225/Cys236, Cys294/Cys361, Cys297/Cys355, and Cys320/Cys330. A propeptide spanning residues 270 to 376 (ADAIGPALPA…PLQCFQTPHL (107 aa)) is cleaved from the precursor. Asn306 is a glycosylation site (N-linked (GlcNAc...) asparagine).

As to quaternary structure, homodimer; disulfide-linked.

It localises to the secreted. Its subcellular location is the extracellular space. It is found in the surface film. Pulmonary surfactant-associated proteins promote alveolar stability by lowering the surface tension at the air-liquid interface in the peripheral air spaces. SP-B increases the collapse pressure of palmitic acid to nearly 70 millinewtons per meter. The protein is Pulmonary surfactant-associated protein B (Sftpb) of Rattus norvegicus (Rat).